The chain runs to 2256 residues: GON-4-like protein (2256 aa).

Disordered stretches follow at residues 1–56 (MLPC…DSAG), 105–213 (PSLE…SLGP), and 227–266 (LFIPTEEQDGEESDKRKKTKKGTKRKRDGRGQEQGTMTYD). Residues 23–35 (EDLHLEAAVKPDT) are compositionally biased toward basic and acidic residues. The segment covering 40-53 (DCTSESLSWGQSHD) has biased composition (polar residues). Over residues 141 to 176 (TREDGGDHTVPEEPPSGEHAEEVKAEGGELEMHSEG) the composition is skewed to basic and acidic residues. A compositionally biased stretch (basic residues) spans 242-254 (RKKTKKGTKRKRD). Residue Ser346 is modified to Phosphoserine. A compositionally biased stretch (acidic residues) spans 366-395 (EDDDSSDEEYQPDEEEEDETAEESLLESDV). Disordered regions lie at residues 366–428 (EDDD…VLSE), 441–460 (SAEVVPMGPPPPPKPKQTRD), and 545–573 (DVENEDEADDDDDPEYNFLEDLDEPDTED). Over residues 545–571 (DVENEDEADDDDDPEYNFLEDLDEPDT) the composition is skewed to acidic residues. The tract at residues 609–1363 (EMGFSNMEDD…DCMEEISSDF (755 aa)) is required for interaction with YY1, SIN3A and HDAC1, and transcriptional repression activity. Residue Ser783 is modified to Phosphoserine. 2 stretches are compositionally biased toward low complexity: residues 947–959 (TAGGSVTAATETS) and 1094–1115 (PWSESQSAPPSSSAPKLMLPSL). Disordered regions lie at residues 947–969 (TAGGSVTAATETSTDQHLQKTSP), 1078–1141 (AALP…SPCV), 1241–1288 (AEGK…EAVS), and 1360–1620 (SSDF…SRAR). The span at 1119–1135 (KFRKPYVRRKPTRRKGA) shows a compositional bias: basic residues. A compositionally biased stretch (basic and acidic residues) spans 1364–1386 (PKQDIGEEVKEECCMELDRDSPQ). Polar residues-rich tracts occupy residues 1387–1401 (EKASSVSEMSKQTAT) and 1429–1444 (LPQSTLSSMDQGTVLN). Phosphoserine is present on Ser1445. A compositionally biased stretch (acidic residues) spans 1475 to 1495 (GAEEEEEEDFDDLTQDEEDEL). Positions 1496-1510 (SSASEESVLSVPELQ) are enriched in low complexity. The span at 1529–1553 (GESEEENSQEENSEPEEEEEEEAEG) shows a compositional bias: acidic residues. Residues 1606–1620 (RSSHRARSRRGSRAR) show a composition bias toward basic residues. PAH domains lie at 1644–1716 (EQKD…LLPE) and 1726–1797 (EQQA…FDHL). 2 disordered regions span residues 1831 to 1886 (VEEE…LKKS) and 1909 to 1966 (LELV…APIP). Residues 1851 to 1868 (EIGVQHQDKESEWPEAAK) show a composition bias toward basic and acidic residues. Residues Ser1921 and Ser1994 each carry the phosphoserine modification. Disordered regions lie at residues 2050–2078 (PETSETERLPGTVELPAPLPSPVSLSTRD) and 2110–2148 (IRGTSSGASASEAAPTASREGLAEDSETQGKGPEAVLPK). Over residues 2111–2129 (RGTSSGASASEAAPTASRE) the composition is skewed to low complexity. A Myb-like domain is found at 2163-2216 (STGEKVVLWTREADRVILTMCQEQGAQPHTFSVISQQLGNKTPVEVSHRFRELM). The interval 2223–2256 (CEASSEDEDDATSTSNADQLSDHGDLLSEEELDE) is disordered.

As to quaternary structure, found in a complex with YY1, SIN3A and HDAC1.

The protein resides in the nucleus. In terms of biological role, has transcriptional repressor activity, probably as part of a complex with YY1, SIN3A and HDAC1. Required for B cell lymphopoiesis. In Rattus norvegicus (Rat), this protein is GON-4-like protein (Gon4l).